The primary structure comprises 113 residues: UPF0102 protein Dgeo_1894 (113 aa).

It belongs to the UPF0102 family.

This chain is UPF0102 protein Dgeo_1894, found in Deinococcus geothermalis (strain DSM 11300 / CIP 105573 / AG-3a).